A 545-amino-acid polypeptide reads, in one-letter code: CTP synthase (545 aa).

Residues 1-266 (MTTNYIFVTG…DDLVCARFGI (266 aa)) are amidoligase domain. Serine 14 provides a ligand contact to CTP. A UTP-binding site is contributed by serine 14. ATP-binding positions include 15–20 (SLGKGI) and aspartate 72. The Mg(2+) site is built by aspartate 72 and glutamate 140. CTP is bound by residues 147-149 (DIE), 187-192 (KTKPTQ), and lysine 223. Residues 187-192 (KTKPTQ) and lysine 223 contribute to the UTP site. Residue 239–241 (KDV) participates in ATP binding. Positions 291–542 (TIGMVGKYIE…IKAAGENARG (252 aa)) constitute a Glutamine amidotransferase type-1 domain. An L-glutamine-binding site is contributed by glycine 352. Residue cysteine 379 is the Nucleophile; for glutamine hydrolysis of the active site. L-glutamine contacts are provided by residues 380 to 383 (LGMQ), glutamate 403, and arginine 470. Catalysis depends on residues histidine 515 and glutamate 517.

This sequence belongs to the CTP synthase family. As to quaternary structure, homotetramer.

It carries out the reaction UTP + L-glutamine + ATP + H2O = CTP + L-glutamate + ADP + phosphate + 2 H(+). The catalysed reaction is L-glutamine + H2O = L-glutamate + NH4(+). The enzyme catalyses UTP + NH4(+) + ATP = CTP + ADP + phosphate + 2 H(+). It functions in the pathway pyrimidine metabolism; CTP biosynthesis via de novo pathway; CTP from UDP: step 2/2. With respect to regulation, allosterically activated by GTP, when glutamine is the substrate; GTP has no effect on the reaction when ammonia is the substrate. The allosteric effector GTP functions by stabilizing the protein conformation that binds the tetrahedral intermediate(s) formed during glutamine hydrolysis. Inhibited by the product CTP, via allosteric rather than competitive inhibition. Functionally, catalyzes the ATP-dependent amination of UTP to CTP with either L-glutamine or ammonia as the source of nitrogen. Regulates intracellular CTP levels through interactions with the four ribonucleotide triphosphates. This is CTP synthase from Vibrio vulnificus (strain CMCP6).